The sequence spans 328 residues: 5,10-methylenetetrahydromethanopterin reductase (328 aa).

Belongs to the mer family.

Its subcellular location is the cytoplasm. The enzyme catalyses 5-methyl-5,6,7,8-tetrahydromethanopterin + oxidized coenzyme F420-(gamma-L-Glu)(n) + H(+) = 5,10-methylenetetrahydromethanopterin + reduced coenzyme F420-(gamma-L-Glu)(n). It participates in one-carbon metabolism; methanogenesis from CO(2); methyl-coenzyme M from 5,10-methylene-5,6,7,8-tetrahydromethanopterin: step 1/2. Functionally, catalyzes the reversible reduction of methylene-H(4)MPT to methyl-H(4)MPT. The chain is 5,10-methylenetetrahydromethanopterin reductase from Methanosarcina mazei (strain ATCC BAA-159 / DSM 3647 / Goe1 / Go1 / JCM 11833 / OCM 88) (Methanosarcina frisia).